Reading from the N-terminus, the 85-residue chain is Protein U62 (85 aa).

This sequence belongs to the herpesviridae UL91 family.

The protein is Protein U62 (U62) of Homo sapiens (Human).